A 257-amino-acid polypeptide reads, in one-letter code: OCIA domain-containing protein 1 (257 aa).

Disordered stretches follow at residues 1–20 (MDSP…PHPL) and 148–257 (YSDE…SWTD). Residues 1 to 110 (MDSPLNDGSH…MRLPNSHLGE (110 aa)) enclose the OCIA domain. Over residues 156-170 (GRSTSLNLDTESRPT) the composition is skewed to polar residues. Over residues 204 to 216 (EDLRRRNREEYSK) the composition is skewed to basic and acidic residues.

Belongs to the OCIAD1 family. Interacts with STAT3 and ARF1. As to expression, expressed in all cells of the primary lymph gland lobe.

Its subcellular location is the endosome. Its function is as follows. Maintains stem cell potency. Involved in endocytic pathways that mediate signaling during hematopoiesis. This chain is OCIA domain-containing protein 1 (asrij), found in Drosophila melanogaster (Fruit fly).